A 417-amino-acid polypeptide reads, in one-letter code: Probable tubulin polyglutamylase ttll-9 (417 aa).

The region spanning Gln-23–Glu-372 is the TTL domain. ATP is bound by residues Gln-188 to Val-191, Lys-201, and Asp-203.

Belongs to the tubulin--tyrosine ligase family. Expressed in head sensory neurons.

Its function is as follows. Polyglutamylase that forms polyglutamate side chains on tubulin. Acts when complexed with other proteins. Appears to be dispensable for polar spindle formation in dividing embryonic cells, for cilia-dependent osmotic avoidance and for male mating behavior. Probably by regulating microtubule stability via the glutamylation of tubulin, regulates PLM axon developmental growth. The polypeptide is Probable tubulin polyglutamylase ttll-9 (Caenorhabditis elegans).